We begin with the raw amino-acid sequence, 190 residues long: Lipid A acyltransferase PagP (190 aa).

The signal sequence occupies residues 1-18 (MKRLISCLTIICALNASA). Active-site residues include His-60, Asp-103, and Ser-104.

The protein belongs to the lipid A palmitoyltransferase family. Homodimer.

The protein localises to the cell outer membrane. It catalyses the reaction a lipid A + a 1,2-diacyl-sn-glycero-3-phosphocholine = a hepta-acyl lipid A + a 2-acyl-sn-glycero-3-phosphocholine. The enzyme catalyses a lipid IVA + a 1,2-diacyl-sn-glycero-3-phosphocholine = a lipid IVB + a 2-acyl-sn-glycero-3-phosphocholine. The catalysed reaction is a lipid IIA + a 1,2-diacyl-sn-glycero-3-phosphocholine = a lipid IIB + a 2-acyl-sn-glycero-3-phosphocholine. In terms of biological role, transfers a fatty acid residue from the sn-1 position of a phospholipid to the N-linked hydroxyfatty acid chain on the proximal unit of lipid A or its precursors. In Legionella pneumophila subsp. pneumophila (strain Philadelphia 1 / ATCC 33152 / DSM 7513), this protein is Lipid A acyltransferase PagP.